The sequence spans 87 residues: UPF0250 protein YE3006 (87 aa).

This sequence belongs to the UPF0250 family.

In Yersinia enterocolitica serotype O:8 / biotype 1B (strain NCTC 13174 / 8081), this protein is UPF0250 protein YE3006.